The primary structure comprises 185 residues: MKLKPVLYLLMLLGCLGLKSAHAATLAHGISASWHSFSQKWNEPQTFDPYIPSIIWHNRWTYDADKIDKYNERPWGAGGGVSHFDKKGNWNGIYLMAFKDSFNKWELISGYGWEKTWRPLSDPDFHLGLGYTAGVTMRDNWSYIPIPVLLPLASIGYEYVSFQMTYIPGTYNNGNVYFAWLRWQL.

Residues 1–14 form the signal peptide; the sequence is MKLKPVLYLLMLLG. C15 carries the N-palmitoyl cysteine lipid modification. The S-diacylglycerol cysteine moiety is linked to residue C15. Catalysis depends on residues H57, D100, and S101.

This sequence belongs to the lipid A palmitoyltransferase family. In terms of assembly, homodimer.

It is found in the cell outer membrane. The catalysed reaction is a lipid A + a 1,2-diacyl-sn-glycero-3-phosphocholine = a hepta-acyl lipid A + a 2-acyl-sn-glycero-3-phosphocholine. It catalyses the reaction a lipid IVA + a 1,2-diacyl-sn-glycero-3-phosphocholine = a lipid IVB + a 2-acyl-sn-glycero-3-phosphocholine. The enzyme catalyses a lipid IIA + a 1,2-diacyl-sn-glycero-3-phosphocholine = a lipid IIB + a 2-acyl-sn-glycero-3-phosphocholine. Functionally, transfers a fatty acid residue from the sn-1 position of a phospholipid to the N-linked hydroxyfatty acid chain on the proximal unit of lipid A or its precursors. This Erwinia sp. (strain Ejp617) protein is Lipid A acyltransferase PagP.